We begin with the raw amino-acid sequence, 99 residues long: Large ribosomal subunit protein bL28 (99 aa).

Belongs to the bacterial ribosomal protein bL28 family.

The polypeptide is Large ribosomal subunit protein bL28 (Rhizobium etli (strain CIAT 652)).